The following is a 164-amino-acid chain: Large ribosomal subunit protein uL15 (164 aa).

Disordered regions lie at residues 1 to 49 (MTKL…SIAG) and 143 to 164 (EKAG…SAEA). A compositionally biased stretch (gly residues) spans 22–36 (RGPGSGKGKTAGRGV).

It belongs to the universal ribosomal protein uL15 family. In terms of assembly, part of the 50S ribosomal subunit.

Binds to the 23S rRNA. The protein is Large ribosomal subunit protein uL15 of Phenylobacterium zucineum (strain HLK1).